The primary structure comprises 296 residues: Myeloid differentiation primary response protein MyD88 (296 aa).

The Death domain maps to 54–109 (MDFEYLEIRQLETQADPTGRLLDAWQGRPGASVGRLLELLTKLGRDDVLLELGPSI). Residues 110–155 (EEDCQKYILKQQQEEAEKPLQVAAVDSSVPRTAELAGITTLDDPLG) form an intermediate domain region. The region spanning 159–293 (ERFDAFICYC…WFWTRLAKAL (135 aa)) is the TIR domain. Ser-244 carries the post-translational modification Phosphoserine.

In terms of assembly, homodimer. Also forms heterodimers with TIRAP. Binds to TLR2, TLR5, IRAK1, IRAK2 and IRAK4 via their respective TIR domains. Interacts with IL18R1. Interacts with BMX, IL1RL1, IKBKE and IRF7. Interacts with LRRFIP1 and LRRFIP2; this interaction positively regulates Toll-like receptor (TLR) signaling in response to agonist. Interacts with FLII. LRRFIP1 and LRRFIP2 compete with FLII for MYD88-binding. Interacts with IRF1. Upon IL1B treatment, forms a complex with PELI1, IRAK1, IRAK4 and TRAF6; this complex recruits MAP3K7/TAK1, TAB1 and TAB2 to mediate NF-kappa-B activation. Direct binding of SMAD6 to PELI1 prevents the complex formation and hence negatively regulates IL1R-TLR signaling and eventually NF-kappa-B-mediated gene expression. May interact with PIK3AP1. Interacts (via TIR domain) with DHX9 (via H2A and OB-fold regions); this interaction is direct. Interacts with OTUD4 deubiquitinase; the interaction is direct. Interacts with TLR4. As to quaternary structure, (Microbial infection) In case of infection, interacts with uropathogenic E.coli protein TcpC; suppressing Toll-like receptor (TLR)-mediated cytokine production. (Microbial infection) In case of infection, interacts with uropathogenic E.faecalis protein TcpF; suppressing Toll-like receptor (TLR)-mediated cytokine production. In terms of assembly, (Microbial infection) In case of infection, interacts with B.melitensis protein TcpB. As to quaternary structure, (Microbial infection) Interacts with human metapneumovirus protein M2-2; this interaction prevents MYD88-mediated cytokine secretion. Ubiquitinated; undergoes 'Lys-63'-linked polyubiquitination. OTUD4 specifically hydrolyzes 'Lys-63'-linked polyubiquitinated MYD88. Deubiquitinated by USP3 that cleaves 'Lys-63'-linked ubiquitin chains leading to inhibition of MYD88-induced NF-kappa-B signaling. In terms of processing, (Microbial infection) Ubiquitinated by human herpesvirus 8 (KSHV) protein RTA/ORF50, leading to proteasomal degradation ans suppression of TLR4 signaling pathway. Ubiquitous.

It is found in the cytoplasm. Its subcellular location is the nucleus. In terms of biological role, adapter protein involved in the Toll-like receptor and IL-1 receptor signaling pathway in the innate immune response. Acts via IRAK1, IRAK2, IRF7 and TRAF6, leading to NF-kappa-B activation, cytokine secretion and the inflammatory response. Increases IL-8 transcription. Involved in IL-18-mediated signaling pathway. Activates IRF1 resulting in its rapid migration into the nucleus to mediate an efficient induction of IFN-beta, NOS2/INOS, and IL12A genes. Upon TLR8 activation by GU-rich single-stranded RNA (GU-rich RNA) derived from viruses such as SARS-CoV-2, SARS-CoV and HIV-1, induces IL1B release through NLRP3 inflammasome activation. MyD88-mediated signaling in intestinal epithelial cells is crucial for maintenance of gut homeostasis and controls the expression of the antimicrobial lectin REG3G in the small intestine. The sequence is that of Myeloid differentiation primary response protein MyD88 from Homo sapiens (Human).